Reading from the N-terminus, the 451-residue chain is Tubulin alpha chain (451 aa).

Glutamine 11 serves as a coordination point for GTP. Lysine 40 carries the N6-acetyllysine modification. The GTP site is built by glutamate 71, serine 140, glycine 144, threonine 145, threonine 179, asparagine 206, and asparagine 228. Glutamate 71 is a Mg(2+) binding site. Glutamate 254 is an active-site residue.

This sequence belongs to the tubulin family. Dimer of alpha and beta chains. A typical microtubule is a hollow water-filled tube with an outer diameter of 25 nm and an inner diameter of 15 nM. Alpha-beta heterodimers associate head-to-tail to form protofilaments running lengthwise along the microtubule wall with the beta-tubulin subunit facing the microtubule plus end conferring a structural polarity. Microtubules usually have 13 protofilaments but different protofilament numbers can be found in some organisms and specialized cells. It depends on Mg(2+) as a cofactor. Undergoes a tyrosination/detyrosination cycle, the cyclic removal and re-addition of a C-terminal tyrosine residue by the enzymes tubulin tyrosine carboxypeptidase (TTCP) and tubulin tyrosine ligase (TTL), respectively. Post-translationally, acetylation of alpha chains at Lys-40 stabilizes microtubules and affects affinity and processivity of microtubule motors. This modification has a role in multiple cellular functions, ranging from cell motility, cell cycle progression or cell differentiation to intracellular trafficking and signaling. In terms of tissue distribution, actively expressed in the lens but does not seem to be lens-specific.

Its subcellular location is the cytoplasm. It localises to the cytoskeleton. It catalyses the reaction GTP + H2O = GDP + phosphate + H(+). In terms of biological role, tubulin is the major constituent of microtubules, a cylinder consisting of laterally associated linear protofilaments composed of alpha- and beta-tubulin heterodimers. Microtubules grow by the addition of GTP-tubulin dimers to the microtubule end, where a stabilizing cap forms. Below the cap, tubulin dimers are in GDP-bound state, owing to GTPase activity of alpha-tubulin. The polypeptide is Tubulin alpha chain (Enteroctopus dofleini (North Pacific giant octopus)).